Consider the following 243-residue polypeptide: Carboxy-S-adenosyl-L-methionine synthase (243 aa).

S-adenosyl-L-methionine contacts are provided by residues Y40, 65–67, 90–91, 118–119, N133, and R200; these read GCS, DN, and DI.

It belongs to the class I-like SAM-binding methyltransferase superfamily. Cx-SAM synthase family. As to quaternary structure, homodimer.

The catalysed reaction is prephenate + S-adenosyl-L-methionine = carboxy-S-adenosyl-L-methionine + 3-phenylpyruvate + H2O. In terms of biological role, catalyzes the conversion of S-adenosyl-L-methionine (SAM) to carboxy-S-adenosyl-L-methionine (Cx-SAM). The chain is Carboxy-S-adenosyl-L-methionine synthase from Shewanella amazonensis (strain ATCC BAA-1098 / SB2B).